The following is a 324-amino-acid chain: Putative transcription factor sel-7 (324 aa).

Positions 67-85 are enriched in polar residues; the sequence is SPPQTVISEAPPQSFTPSA. Residues 67–151 form a disordered region; the sequence is SPPQTVISEA…DEKVLADGPF (85 aa). Residues 86–98 show a composition bias toward low complexity; that stretch reads TNSTSDKTSSSLK. Acidic residues predominate over residues 106–123; that stretch reads SDGDLDMEGEEDTEELFD. A compositionally biased stretch (polar residues) spans 124 to 133; sequence NESQPSQRNQ. Residues 134-146 are compositionally biased toward basic and acidic residues; it reads SPKETEVEDEKVL.

As to quaternary structure, multimer. May interact with mediator complex subunit mdt-29. In terms of tissue distribution, widely expressed, including in pharyngeal muscle cells and body wall muscle cells.

The protein localises to the nucleus. Functionally, putative transcription factor. Positive regulator of the lin-12/Notch signaling pathway. Binds to specific DNA sequences in regulatory elements. Involved in cell fate decisions that require cell-cell interactions, such as the anchor cell (AC) / ventral uterine (VU) precursor cell fate decision. Heterochronic protein which controls the choice of stage specific cell fates, including the larval L3 stage-specific fate of seam cells. Involved in regulating the temporal expression pattern of hunchback-like protein hbl-1, thereby playing a role in the progression between larval stages L2 and L3. In Caenorhabditis elegans, this protein is Putative transcription factor sel-7.